An 857-amino-acid chain; its full sequence is DNA mismatch repair protein MutS (857 aa).

608-615 is an ATP binding site; the sequence is GPNMSGKS.

This sequence belongs to the DNA mismatch repair MutS family.

In terms of biological role, this protein is involved in the repair of mismatches in DNA. It is possible that it carries out the mismatch recognition step. This protein has a weak ATPase activity. The sequence is that of DNA mismatch repair protein MutS from Lacticaseibacillus casei (strain BL23) (Lactobacillus casei).